A 318-amino-acid chain; its full sequence is Apo-salmochelin esterase (318 aa).

The helical transmembrane segment at 13 to 32 (KAIFFHLSCLTLICSAQVYA) threads the bilayer. Residues serine 189 and histidine 287 contribute to the active site.

This sequence belongs to the esterase D family. Monomer.

Its subcellular location is the cell inner membrane. The enzyme catalyses enterobactin + H2O = N-(2,3-dihydroxybenzoyl)-L-serine trimer. The catalysed reaction is monoglucosyl-enterobactin + H2O = [N-(2,3-dihydroxybenzoyl)-L-seryl]2-N-(C-5-[deoxy-beta-D-glucosyl]-2,3-dihydroxybenzoyl)-L-serine + H(+). It carries out the reaction diglucosyl-enterobactin + H2O = N-(2,3-dihydroxybenzoyl)-L-seryl-[N-(C-5-[deoxy-beta-D-glucosyl]-2,3-dihydroxybenzoyl)-L-serine]2 + H(+). It catalyses the reaction triglucosyl-enterobactin + H2O = [N-(C-5-[deoxy-beta-D-glucosyl]-2,3-dihydroxybenzoyl)-L-serine]3 + H(+). Functionally, catalyzes the hydrolysis of both the apo and Fe3(+)-bound forms of enterobactin (Ent), monoglucosyl-C-Ent (MGE), diglucosyl-C-Ent (DGE) and triglucosyl-C-Ent (TGE). It prefers apo siderophores as substrates and hydrolyzes the Fe3(+)-bound siderophores very inefficiently. Tends to hydrolyze the trilactone just once to produce linearized trimers. May hydrolyze and linearize some or all of apo enterobactins while they are being exported. This Escherichia coli O6:H1 (strain CFT073 / ATCC 700928 / UPEC) protein is Apo-salmochelin esterase.